The following is a 131-amino-acid chain: MRHYEIVFMVHPDQSEQVPGMIERYTGAITAAEGTIHRLEDWGRRQLAYPINKLHKAHYVLLNVEAPQEAIDELETNFRFNDAVIRSMVMRTKNAVTEASPMVKAKDERRERRDDFANETADDSDAGDSEE.

The interval 98 to 131 is disordered; sequence EASPMVKAKDERRERRDDFANETADDSDAGDSEE. Basic and acidic residues predominate over residues 104–116; sequence KAKDERRERRDDF. Residues 120 to 131 show a composition bias toward acidic residues; that stretch reads TADDSDAGDSEE.

It belongs to the bacterial ribosomal protein bS6 family.

Binds together with bS18 to 16S ribosomal RNA. In Enterobacter sp. (strain 638), this protein is Small ribosomal subunit protein bS6.